A 449-amino-acid polypeptide reads, in one-letter code: Biotin carboxylase (449 aa).

In terms of domain architecture, Biotin carboxylation spans 4-448 (MIEKVLIANR…NIHYLEKMLG (445 aa)). ATP-binding positions include Lys119, Lys162, 168 to 169 (GG), 204 to 207 (EKYL), His212, and His239. Residues 123 to 320 (IAAMKAAGVP…IVKEQILIAA (198 aa)) form the ATP-grasp domain. Lys241 provides a ligand contact to hydrogencarbonate. Residues Glu279 and Glu291 each coordinate ATP. Residues Glu279, Glu291, and Asn293 each coordinate Mg(2+). Mn(2+)-binding residues include Glu279, Glu291, and Asn293. Residues Arg295, Val298, and Arg341 each contribute to the hydrogencarbonate site. Arg295 is a catalytic residue. Arg341 contributes to the biotin binding site.

Acetyl-CoA carboxylase is a heterohexamer of biotin carboxyl carrier protein, biotin carboxylase and the two subunits of carboxyl transferase in a 2:2 complex. Mg(2+) serves as cofactor. The cofactor is Mn(2+).

It carries out the reaction N(6)-biotinyl-L-lysyl-[protein] + hydrogencarbonate + ATP = N(6)-carboxybiotinyl-L-lysyl-[protein] + ADP + phosphate + H(+). Its pathway is lipid metabolism; malonyl-CoA biosynthesis; malonyl-CoA from acetyl-CoA: step 1/1. This protein is a component of the acetyl coenzyme A carboxylase complex; first, biotin carboxylase catalyzes the carboxylation of the carrier protein and then the transcarboxylase transfers the carboxyl group to form malonyl-CoA. The chain is Biotin carboxylase (accC) from Allochromatium vinosum (strain ATCC 17899 / DSM 180 / NBRC 103801 / NCIMB 10441 / D) (Chromatium vinosum).